Here is a 349-residue protein sequence, read N- to C-terminus: Probable arabinogalactan endo-beta-1,4-galactanase A (349 aa).

An N-terminal signal peptide occupies residues Met-1–Ala-15. N-linked (GlcNAc...) asparagine glycosylation is present at Asn-126. Residue Glu-150 is the Proton donor of the active site. Glu-261 functions as the Nucleophile in the catalytic mechanism.

It belongs to the glycosyl hydrolase 53 family.

It is found in the secreted. The enzyme catalyses The enzyme specifically hydrolyzes (1-&gt;4)-beta-D-galactosidic linkages in type I arabinogalactans.. In terms of biological role, endogalactanase involved in the degradation of plant cell wall polysaccharides, and more particularly of hairy regions of pectin. In Aspergillus terreus (strain NIH 2624 / FGSC A1156), this protein is Probable arabinogalactan endo-beta-1,4-galactanase A (galA).